The sequence spans 76 residues: UPF0154 protein Exig_1099 (76 aa).

Residues 4–24 (WIWILIALLCLVAGVALGFYI) form a helical membrane-spanning segment. A disordered region spans residues 54-76 (KPSQKKVNQVMRSMSGSMKSPKK).

This sequence belongs to the UPF0154 family.

The protein localises to the cell membrane. The sequence is that of UPF0154 protein Exig_1099 from Exiguobacterium sibiricum (strain DSM 17290 / CCUG 55495 / CIP 109462 / JCM 13490 / 255-15).